The sequence spans 357 residues: MTDSTNVSNTENLMKYMSLDQRGSVMAEYIWIDAHGGTRSKTKTLSKAPSSVDELPEWNFDGSSTAQAPGDNSDVYLRPVAMYPDPFRRGDNILVLCETWDSDGSPNKFNYRHDCARLMETHAKEEFWFGLEQEYTLLGPDGWPYGWPKGGFPGAQGPYYCGVGTGKVYCRDIVEAHYRACLYAGVKISGINAEVMPSQWEYQVGPCHGIEMGDHLWISRFLLHRVAEEFGVKISFDPKPIKGDWNGAGLHTNVSTTSTRAEGGIKAIESYMKKLEARHVEHIAVYGEGNEERLTGRHETGNIDKFSYGVADRGGSIRIPRQVAKDGKGYFEDRRPASNADPYQITGIIAETLCGGL.

The GS beta-grasp domain maps to 25 to 104 (VMAEYIWIDA…VLCETWDSDG (80 aa)). The GS catalytic domain maps to 111 to 357 (YRHDCARLME…IIAETLCGGL (247 aa)).

This sequence belongs to the glutamine synthetase family. As to quaternary structure, homooctamer.

Its subcellular location is the cytoplasm. The catalysed reaction is L-glutamate + NH4(+) + ATP = L-glutamine + ADP + phosphate + H(+). This is Glutamine synthetase (glnA) from Emericella nidulans (strain FGSC A4 / ATCC 38163 / CBS 112.46 / NRRL 194 / M139) (Aspergillus nidulans).